Here is a 130-residue protein sequence, read N- to C-terminus: MQTTFTELMQQLFLKLGLNHQVNENDVYTFEVDGHIQVLIACYHQQWVQLFSELGADLPTNDNLFGEHWPAHVQGRLDGKSILWSQQSLVGLDIDEMQAWLERFIDDIEQRKEPQNTKFQPNSTSPILFI.

Binds to YopT.

Functionally, functions as a specific chaperone for YopT. This is Chaperone protein SycT (sycT) from Yersinia enterocolitica.